A 769-amino-acid polypeptide reads, in one-letter code: Gephyrin (769 aa).

Positions Q14 to E153 are MPT Mo-transferase. The segment at L140–H349 is interaction with GABARAP. Disordered stretches follow at residues D181–S232 and T260–V299. Pro residues predominate over residues P187–T199. 2 positions are modified to phosphoserine: S188 and S194. A Phosphothreonine modification is found at T198. Phosphoserine is present on S200. C212 carries the S-palmitoyl cysteine lipid modification. The segment covering A261 to T286 has biased composition (polar residues). S262 bears the Phosphoserine mark. Phosphothreonine is present on residues T265 and T266. A phosphoserine mark is found at S268 and S270. The S-palmitoyl cysteine moiety is linked to residue C284. The MPT adenylyltransferase stretch occupies residues S327–L769. S338 is modified (phosphoserine).

The protein in the N-terminal section; belongs to the MoaB/Mog family. It in the C-terminal section; belongs to the MoeA family. As to quaternary structure, homotrimer, homodimer and homooligomer. Interacts with SRGAP2 (via SH3 domain). Interacts with GLRB. Interacts with GABARAP. Interacts with GABRA3. GABRA3 and GLRB occupy overlapping binding sites. Interacts with ARHGAP32; IQSEC3, INSYN1 and INSYN2A. Requires Mg(2+) as cofactor. In terms of processing, palmitoylated. Palmitoylation is stimulated by GABA type A receptors activity. Palmitoylation by ZDHHC12 regulates clustering at synapses.

It is found in the postsynaptic cell membrane. It localises to the cell membrane. Its subcellular location is the cytoplasm. The protein resides in the cytosol. The protein localises to the cytoskeleton. It is found in the cell projection. It localises to the dendrite. Its subcellular location is the postsynaptic density. The enzyme catalyses molybdopterin + ATP + H(+) = adenylyl-molybdopterin + diphosphate. The catalysed reaction is adenylyl-molybdopterin + molybdate = Mo-molybdopterin + AMP + H(+). Its pathway is cofactor biosynthesis; molybdopterin biosynthesis. Its activity is regulated as follows. Inhibited by copper and tungsten. Its function is as follows. Microtubule-associated protein involved in membrane protein-cytoskeleton interactions. It is thought to anchor the inhibitory glycine receptor (GLYR) to subsynaptic microtubules. Acts as a major instructive molecule at inhibitory synapses, where it also clusters GABA type A receptors. Also has a catalytic activity and catalyzes two steps in the biosynthesis of the molybdenum cofactor. In the first step, molybdopterin is adenylated. Subsequently, molybdate is inserted into adenylated molybdopterin and AMP is released. The protein is Gephyrin (Gphn) of Mus musculus (Mouse).